A 255-amino-acid chain; its full sequence is Putative cysteine-rich repeat secretory protein 32 (255 aa).

Positions 1-28 (MYSSYSLFKCLVCFYILGIQVLIHSVSS) are cleaved as a signal peptide. 2 Gnk2-homologous domains span residues 35 to 136 (YLHH…TINS) and 143 to 252 (YENT…LYPF).

The protein belongs to the cysteine-rich repeat secretory protein family.

It is found in the secreted. The protein is Putative cysteine-rich repeat secretory protein 32 (CRRSP32) of Arabidopsis thaliana (Mouse-ear cress).